The primary structure comprises 234 residues: Sugar fermentation stimulation protein homolog (234 aa).

This sequence belongs to the SfsA family.

This chain is Sugar fermentation stimulation protein homolog, found in Shewanella halifaxensis (strain HAW-EB4).